We begin with the raw amino-acid sequence, 460 residues long: Cyclin-T1-2 (460 aa).

2 disordered regions span residues 1 to 20 (MDEA…SSVA) and 285 to 345 (QPIS…QDHS). Residues 314-324 (SDDHSVHDGSR) show a composition bias toward basic and acidic residues. Positions 332–345 (NSESEAQKNLQDHS) are enriched in polar residues.

Belongs to the cyclin family. Cyclin T subfamily.

In Arabidopsis thaliana (Mouse-ear cress), this protein is Cyclin-T1-2 (CYCT1-2).